The sequence spans 194 residues: Putative manganese efflux pump MntP (194 aa).

A run of 6 helical transmembrane segments spans residues 3 to 23 (PITTLLIGIAMSTDAFAAAIG), 37 to 57 (LYVAVIFGVIETATPIAGWLL), 65 to 85 (IATFDHWIAFGLLGGLGIHMI), 112 to 132 (LAATALATSIDAAAIGISMAF), 137 to 157 (IGIVAAVIGLCTFTMVIFGVM), and 170 to 190 (AEIVGGIILIIVGSTILYEHL).

The protein belongs to the MntP (TC 9.B.29) family.

The protein localises to the cell inner membrane. Functionally, probably functions as a manganese efflux pump. In Xylella fastidiosa (strain M23), this protein is Putative manganese efflux pump MntP.